The sequence spans 83 residues: Cytochrome b559 subunit alpha (83 aa).

Residues 21-35 (VIHSITIPSLFIAGW) form a helical membrane-spanning segment. Residue His23 coordinates heme.

It belongs to the PsbE/PsbF family. As to quaternary structure, heterodimer of an alpha subunit and a beta subunit. PSII is composed of 1 copy each of membrane proteins PsbA, PsbB, PsbC, PsbD, PsbE, PsbF, PsbH, PsbI, PsbJ, PsbK, PsbL, PsbM, PsbT, PsbX, PsbY, PsbZ, Psb30/Ycf12, at least 3 peripheral proteins of the oxygen-evolving complex and a large number of cofactors. It forms dimeric complexes. The cofactor is heme b.

Its subcellular location is the plastid. The protein localises to the chloroplast thylakoid membrane. This b-type cytochrome is tightly associated with the reaction center of photosystem II (PSII). PSII is a light-driven water:plastoquinone oxidoreductase that uses light energy to abstract electrons from H(2)O, generating O(2) and a proton gradient subsequently used for ATP formation. It consists of a core antenna complex that captures photons, and an electron transfer chain that converts photonic excitation into a charge separation. This chain is Cytochrome b559 subunit alpha, found in Mesembryanthemum crystallinum (Common ice plant).